We begin with the raw amino-acid sequence, 227 residues long: E3 ubiquitin-protein ligase RNF186 (227 aa).

An RING-type zinc finger spans residues Cys-40 to Arg-86. Transmembrane regions (helical) follow at residues His-158–Leu-178 and Trp-180–Pro-200.

Interacts with BNIP1. Polyubiquitinated. 'Lys-29'-linked autoubiquitination leads to proteasomal degradation.

The protein resides in the endoplasmic reticulum membrane. The catalysed reaction is S-ubiquitinyl-[E2 ubiquitin-conjugating enzyme]-L-cysteine + [acceptor protein]-L-lysine = [E2 ubiquitin-conjugating enzyme]-L-cysteine + N(6)-ubiquitinyl-[acceptor protein]-L-lysine.. The protein operates within protein modification; protein ubiquitination. E3 ubiquitin protein ligase that is part of an apoptotic signaling pathway activated by endoplasmic reticulum stress. Stimulates the expression of proteins specific of the unfolded protein response (UPR), ubiquitinates BNIP1 and regulates its localization to the mitochondrion and induces calcium release from the endoplasmic reticulum that ultimately leads to cell apoptosis. Plays a role in the maintenance of intestinal homeostasis and clearance of enteric pathogens. Upon NOD2 stimulation, ubiquitinates the ER stress sensor activating transcription factor 6/ATF6 and promotes the unfolded protein response UPR. Participates in basal level of autophagy maintenance by regulating the ubiquitination of EPHB2 and EPHB3. Upon stimulation by ligand EFNB1, ubiquitinates EPHB2 and further recruits MAP1LC3B for autophagy induction. Controls nutrient sensing by ubiquitinating Sestrin-2/SESN2, which is an intracellular sensor of cytosolic leucine and inhibitor of mTORC1 activity. The chain is E3 ubiquitin-protein ligase RNF186 from Homo sapiens (Human).